A 118-amino-acid polypeptide reads, in one-letter code: uncharacterized protein (118 aa).

2 helical membrane passes run 7 to 27 and 34 to 58; these read VIVKCEFFCIFTFIFGCFIIE and VFVACCTIIKMGRCNMCIFITAIIF.

Its subcellular location is the membrane. This is an uncharacterized protein from Saccharomyces cerevisiae (strain ATCC 204508 / S288c) (Baker's yeast).